The following is a 349-amino-acid chain: Terpene cyclase janA (349 aa).

Asparagine 80 carries an N-linked (GlcNAc...) asparagine glycan. 6 consecutive transmembrane segments (helical) span residues 81-101 (LSLYGVAFASALVPMWLVIVL), 116-136 (LAFLAGPLVQCLGPGLVIPAI), 155-175 (IGFYPSSMIIGYILPLILAAL), 189-209 (LIAVWQGWPVYTSLIMLIIHY), 223-243 (IACAFAFACSTAGHLAFLWFA), and 308-328 (VILIFGMAGVVFLGPCSVALL).

It belongs to the membrane-bound ascI terpene cyclase family.

It localises to the membrane. It functions in the pathway secondary metabolite biosynthesis. In terms of biological role, part of the gene cluster that mediates the biosynthesis of the indole diterpenes janthitremanes such as shearinine K or shearinine A. The geranylgeranyl diphosphate (GGPP) synthase janG catalyzes the first step in janthitremane biosynthesis via conversion of farnesyl pyrophosphate and isopentyl pyrophosphate into geranylgeranyl pyrophosphate (GGPP). Condensation of indole-3-glycerol phosphate with GGPP by the prenyl transferase janC then forms 3-geranylgeranylindole (3-GGI). Epoxidation by the FAD-dependent monooxygenase janM leads to a epoxidized-GGI that is substrate of the terpene cyclase janB for cyclization to yield paspaline. Paspaline is subsequently converted to 13-desoxypaspaline by the cytochrome P450 monooxygenase janP, via beta-PC-M6 in a series of alpha-face oxidations. The cytochrome P450 monooxygenase janQ is proposed to carry out sequential beta-face oxidation steps at C-7 and C-13 of 13-desoxypaspaline to form paspalicine and paspalinine respectively. The indole diterpene prenyltransferase janD may then convert paspalinine into shearinine K which is substrate of janO and/or additional enzymes for oxidation and cyclization to generate shearinine A. The chain is Terpene cyclase janA from Penicillium janthinellum (Penicillium vitale).